A 499-amino-acid chain; its full sequence is Proline dehydrogenase 1, mitochondrial (499 aa).

The N-terminal 72 residues, 1–72 (MATRLLRTNF…LDLSDQARLF (72 aa)), are a transit peptide targeting the mitochondrion.

It belongs to the proline oxidase family. Requires FAD as cofactor. Ubiquitous. Highest expression in pollen grains, in the stigma and in developing embryos.

Its subcellular location is the mitochondrion. The enzyme catalyses L-proline + a quinone = (S)-1-pyrroline-5-carboxylate + a quinol + H(+). It participates in amino-acid degradation; L-proline degradation into L-glutamate; L-glutamate from L-proline: step 1/2. Its function is as follows. Converts proline to delta-1-pyrroline-5-carboxylate. This is Proline dehydrogenase 1, mitochondrial (POX1) from Arabidopsis thaliana (Mouse-ear cress).